The chain runs to 273 residues: MNNRVHQGHLARKRFGQNFLNDQFVIDSIVSAINPQKGQAMVEIGPGLAALTEPVGERLDQLTVIELDRDLAARLQTHPFLGPKLTIYQQDAMTFNFGELAEKMGQPLRVFGNLPYNISTPLMFHLFSYTDAIADMHFMLQKEVVNRLVAGPNSKAYGRLSVMAQYYCNVIPVLEVPPSAFTPPPKVDSAVVRLVPHATMPHPVKDIRVLSRITTEAFNQRRKTIRNSLGNLFSVEVLTGMGIDPAMRAENISVAQYCQMANYLAENAPLQES.

N18, L20, G45, E66, D91, and N113 together coordinate S-adenosyl-L-methionine.

The protein belongs to the class I-like SAM-binding methyltransferase superfamily. rRNA adenine N(6)-methyltransferase family. RsmA subfamily.

It localises to the cytoplasm. It catalyses the reaction adenosine(1518)/adenosine(1519) in 16S rRNA + 4 S-adenosyl-L-methionine = N(6)-dimethyladenosine(1518)/N(6)-dimethyladenosine(1519) in 16S rRNA + 4 S-adenosyl-L-homocysteine + 4 H(+). In terms of biological role, specifically dimethylates two adjacent adenosines (A1518 and A1519) in the loop of a conserved hairpin near the 3'-end of 16S rRNA in the 30S particle. May play a critical role in biogenesis of 30S subunits. This Shigella flexneri protein is Ribosomal RNA small subunit methyltransferase A.